We begin with the raw amino-acid sequence, 262 residues long: Thiazole synthase (262 aa).

The active-site Schiff-base intermediate with DXP is Lys97. 1-deoxy-D-xylulose 5-phosphate contacts are provided by residues Gly158, 185–186 (AG), and 207–208 (NT). The interval 243–262 (DKAQASTPTVGQPFWHSAEY) is disordered.

Belongs to the ThiG family. Homotetramer. Forms heterodimers with either ThiH or ThiS.

It is found in the cytoplasm. The enzyme catalyses [ThiS sulfur-carrier protein]-C-terminal-Gly-aminoethanethioate + 2-iminoacetate + 1-deoxy-D-xylulose 5-phosphate = [ThiS sulfur-carrier protein]-C-terminal Gly-Gly + 2-[(2R,5Z)-2-carboxy-4-methylthiazol-5(2H)-ylidene]ethyl phosphate + 2 H2O + H(+). It functions in the pathway cofactor biosynthesis; thiamine diphosphate biosynthesis. Functionally, catalyzes the rearrangement of 1-deoxy-D-xylulose 5-phosphate (DXP) to produce the thiazole phosphate moiety of thiamine. Sulfur is provided by the thiocarboxylate moiety of the carrier protein ThiS. In vitro, sulfur can be provided by H(2)S. The chain is Thiazole synthase from Neisseria meningitidis serogroup C (strain 053442).